Here is a 507-residue protein sequence, read N- to C-terminus: ATP synthase subunit alpha, chloroplastic (507 aa).

An ATP-binding site is contributed by 170–177; that stretch reads GDRQTGKT. The residue at position 257 (Thr-257) is a Phosphothreonine.

The protein belongs to the ATPase alpha/beta chains family. F-type ATPases have 2 components, CF(1) - the catalytic core - and CF(0) - the membrane proton channel. CF(1) has five subunits: alpha(3), beta(3), gamma(1), delta(1), epsilon(1). CF(0) has four main subunits: a, b, b' and c.

It is found in the plastid. It localises to the chloroplast thylakoid membrane. It catalyses the reaction ATP + H2O + 4 H(+)(in) = ADP + phosphate + 5 H(+)(out). Its function is as follows. Produces ATP from ADP in the presence of a proton gradient across the membrane. The alpha chain is a regulatory subunit. In Draba nemorosa (Woodland whitlowgrass), this protein is ATP synthase subunit alpha, chloroplastic.